A 499-amino-acid polypeptide reads, in one-letter code: Sensor histidine kinase PdtaS (499 aa).

Residues 4-149 form a GAF region; that stretch reads LGDLLAEHTM…PLEGAYLDCA (146 aa). Residues 178 to 289 form a PAS-like region; it reads DGFIRLNEGG…TEVKRRDRAL (112 aa). One can recognise a Histidine kinase domain in the interval 298–493; the sequence is EIHHRVKNNL…DVVLRVPIGR (196 aa). The residue at position 301 (histidine 301) is a Phosphohistidine; by autocatalysis.

Post-translationally, autophosphorylated.

The protein resides in the cytoplasm. It carries out the reaction ATP + protein L-histidine = ADP + protein N-phospho-L-histidine.. Functionally, member of the two-component regulatory system PdtaR/PdtaS. This two-component system plays an essential role in mycobacterial adaptation to poor nutrient conditions. Nutrient deprivation results in increasing intracellular concentrations of cyclic diguanosine monophosphate (c-di-GMP), which binds to the PdtaS sensor and promotes its autophosphorylation, leading to the activation of the signaling cascade. The phosphate group is then transferred to PdtaR. This Mycolicibacterium smegmatis (strain ATCC 700084 / mc(2)155) (Mycobacterium smegmatis) protein is Sensor histidine kinase PdtaS.